A 239-amino-acid polypeptide reads, in one-letter code: MIEIIPAIDIIDGKCVRLSQGDYDSKKVYNENPVEVAKEFEANGVRRLHVVDLDGAASHHVVNHRVLEQIATRTSLIVDFGGGVKSDEDLKIAFESGAQMVTGGSVAVKDPELFCHWLEVYGSEKIILGADVKEHKIAVNGWKDESACELFPFLEDYINKGIQKVICTDISCDGMLKGPSIDLYKEMLEKFPNLYLMASGGVSNVDDIIALNEAGVPGVIFGKALYEGHITLKDLRIFL.

Asp9 serves as the catalytic Proton acceptor. The active-site Proton donor is the Asp131.

The protein belongs to the HisA/HisF family.

The protein resides in the cytoplasm. It catalyses the reaction 1-(5-phospho-beta-D-ribosyl)-5-[(5-phospho-beta-D-ribosylamino)methylideneamino]imidazole-4-carboxamide = 5-[(5-phospho-1-deoxy-D-ribulos-1-ylimino)methylamino]-1-(5-phospho-beta-D-ribosyl)imidazole-4-carboxamide. The protein operates within amino-acid biosynthesis; L-histidine biosynthesis; L-histidine from 5-phospho-alpha-D-ribose 1-diphosphate: step 4/9. This Bacteroides thetaiotaomicron (strain ATCC 29148 / DSM 2079 / JCM 5827 / CCUG 10774 / NCTC 10582 / VPI-5482 / E50) protein is 1-(5-phosphoribosyl)-5-[(5-phosphoribosylamino)methylideneamino] imidazole-4-carboxamide isomerase.